The following is a 720-amino-acid chain: Fatty acid CoA ligase Acsl3 (720 aa).

A helical; Signal-anchor for type III membrane protein transmembrane segment spans residues Ile-21–Phe-41. The Cytoplasmic segment spans residues Tyr-42–Lys-720. Residue Ser-683 is modified to Phosphoserine.

The protein belongs to the ATP-dependent AMP-binding enzyme family. Mg(2+) is required as a cofactor. In terms of tissue distribution, predominantly expressed in the brain, and to a much lesser extent, in lung, adrenal gland, kidney, small intestine, and adipose tissue but not detected in heart or liver.

The protein localises to the mitochondrion outer membrane. It localises to the peroxisome membrane. The protein resides in the microsome membrane. Its subcellular location is the endoplasmic reticulum membrane. The enzyme catalyses a long-chain fatty acid + ATP + CoA = a long-chain fatty acyl-CoA + AMP + diphosphate. The catalysed reaction is (5Z,8Z,11Z,14Z)-eicosatetraenoate + ATP + CoA = (5Z,8Z,11Z,14Z)-eicosatetraenoyl-CoA + AMP + diphosphate. It carries out the reaction a medium-chain fatty acid + ATP + CoA = a medium-chain fatty acyl-CoA + AMP + diphosphate. It catalyses the reaction 15-hydroxy-(5Z,8Z,11Z,13E)-eicosatetraenoate + ATP + CoA = 15-hydroxy-(5Z,8Z,11Z,13E)-eicosatetraenoyl-CoA + AMP + diphosphate. The enzyme catalyses 12-hydroxy-(5Z,8Z,10E,14Z)-eicosatetraenoate + ATP + CoA = 12-hydroxy-(5Z,8Z,10E,14Z)-eicosatetraenoyl-CoA + AMP + diphosphate. The catalysed reaction is 5-hydroxy-(6E,8Z,11Z,14Z)-eicosatetraenoate + ATP + CoA = 5-hydroxy-(6E,8Z,11Z,14Z)-eicosatetraenoyl-CoA + AMP + diphosphate. It carries out the reaction 14,15-epoxy-(5Z,8Z,11Z)-eicosatrienoate + ATP + CoA = 14,15-epoxy-(5Z,8Z,11Z)-eicosatrienoyl-CoA + AMP + diphosphate. It catalyses the reaction 11,12-epoxy-(5Z,8Z,14Z)-eicosatrienoate + ATP + CoA = 11,12-epoxy-(5Z,8Z,14Z)-eicosatrienoyl-CoA + AMP + diphosphate. The enzyme catalyses (E)-hexadec-2-enoate + ATP + CoA = (2E)-hexadecenoyl-CoA + AMP + diphosphate. The catalysed reaction is hexadecanoate + ATP + CoA = hexadecanoyl-CoA + AMP + diphosphate. It carries out the reaction tetradecanoate + ATP + CoA = tetradecanoyl-CoA + AMP + diphosphate. It catalyses the reaction dodecanoate + ATP + CoA = dodecanoyl-CoA + AMP + diphosphate. The enzyme catalyses octadecanoate + ATP + CoA = octadecanoyl-CoA + AMP + diphosphate. The catalysed reaction is eicosanoate + ATP + CoA = eicosanoyl-CoA + AMP + diphosphate. It carries out the reaction (9Z)-octadecenoate + ATP + CoA = (9Z)-octadecenoyl-CoA + AMP + diphosphate. It catalyses the reaction (9Z)-hexadecenoate + ATP + CoA = (9Z)-hexadecenoyl-CoA + AMP + diphosphate. The enzyme catalyses (9Z,12Z)-octadecadienoate + ATP + CoA = (9Z,12Z)-octadecadienoyl-CoA + AMP + diphosphate. The catalysed reaction is (9Z,12Z,15Z)-octadecatrienoate + ATP + CoA = (9Z,12Z,15Z)-octadecatrienoyl-CoA + AMP + diphosphate. It carries out the reaction (4Z,7Z,10Z,13Z,16Z,19Z)-docosahexaenoate + ATP + CoA = (4Z,7Z,10Z,13Z,16Z,19Z)-docosahexaenoyl-CoA + AMP + diphosphate. It catalyses the reaction (5Z,8Z,11Z,14Z,17Z)-eicosapentaenoate + ATP + CoA = (5Z,8Z,11Z,14Z,17Z)-eicosapentaenoyl-CoA + AMP + diphosphate. The enzyme catalyses a fatty acid + ATP + CoA = a fatty acyl-CoA + AMP + diphosphate. Functionally, catalyzes the conversion of long-chain fatty acids to their active form acyl-CoA for both synthesis of cellular lipids, and degradation via beta-oxidation. ACSL3 is required for the incorporation of fatty acids into phosphatidylcholine, the major phospholipid located on the surface of VLDL (very low density lipoproteins). Has mainly an anabolic role in energy metabolism. Mediates hepatic lipogenesis. Preferentially uses myristate, laurate, arachidonate and eicosapentaenoate as substrates. Both isoforms exhibit the same level of activity. This chain is Fatty acid CoA ligase Acsl3, found in Rattus norvegicus (Rat).